A 593-amino-acid chain; its full sequence is UvrABC system protein C (593 aa).

The GIY-YIG domain maps to 17–94; it reads MEPGCYLMKD…IKQYQPRYNI (78 aa). Positions 199–234 constitute a UVR domain; that stretch reads KTILKSLEERMLTASESLDFERAKEYRDLIQHIQNL.

It belongs to the UvrC family. Interacts with UvrB in an incision complex.

The protein localises to the cytoplasm. Functionally, the UvrABC repair system catalyzes the recognition and processing of DNA lesions. UvrC both incises the 5' and 3' sides of the lesion. The N-terminal half is responsible for the 3' incision and the C-terminal half is responsible for the 5' incision. The protein is UvrABC system protein C of Staphylococcus aureus (strain MSSA476).